Consider the following 401-residue polypeptide: MGILGIIVEYNPFHNGHLYHLQTSKELTKCDYTIAVMSGNFVQRGEPAIVDKWKRTQMALKAGIDLVIELPVVYATSTAENFAYGAVKLLDSLKIVDCFSFGSEKGDLNELTKIAEILLEEPIYYRKALKEYLKSGITFAKARELALQKVINNNEIEKILQTSNNILAIEYLKSLKKIGSSITPFTIKRKGSLYTSLELKGEFASASSIRKHIFEKGLEGLEKYIPDFTKEILQSSFEKKQGPVSLEEFSNILIYLLRNHIPLNHIFDVSEGLENKIYKASYKTNNVEELMKLVKSKRYTESRIRHILIHLLLNIDKQIFKEFDGPNYIRVLGFNEKGKEMLREIKKKSPLPIITKVSQYKEKLSNTKMFEKDLFATDVYTLAYKNSSIAGLDFIHPLIKL.

ATP is bound by residues 7 to 20, glycine 102, asparagine 164, and arginine 189; that span reads IVEY…HLYH.

This sequence belongs to the TmcAL family.

It localises to the cytoplasm. The enzyme catalyses cytidine(34) in elongator tRNA(Met) + acetate + ATP = N(4)-acetylcytidine(34) in elongator tRNA(Met) + AMP + diphosphate. Its function is as follows. Catalyzes the formation of N(4)-acetylcytidine (ac(4)C) at the wobble position of elongator tRNA(Met), using acetate and ATP as substrates. First activates an acetate ion to form acetyladenylate (Ac-AMP) and then transfers the acetyl group to tRNA to form ac(4)C34. This is tRNA(Met) cytidine acetate ligase from Thermoanaerobacter pseudethanolicus (strain ATCC 33223 / 39E) (Clostridium thermohydrosulfuricum).